A 141-amino-acid chain; its full sequence is MSFLQPSRQKYRKTQRGTLKGKSFRGNQVAFGEYGIQALESHWITQRQIEASRIALVRSLRKGTKVWIRIFPDKPYTKKPAEVRGGGGKGDPEGYVAVVKPGRIMFEFSDVPQDMAEEAFRKVSAKLPIKVRLVKAGGMSI.

The protein belongs to the universal ribosomal protein uL16 family. In terms of assembly, part of the 50S ribosomal subunit.

Functionally, binds 23S rRNA and is also seen to make contacts with the A and possibly P site tRNAs. This is Large ribosomal subunit protein uL16 from Hydrogenobaculum sp. (strain Y04AAS1).